Consider the following 210-residue polypeptide: Probable GTP-binding protein EngB (210 aa).

An EngB-type G domain is found at 30–204; it reads QGYEVAFAGR…YKVLAGWMEL (175 aa). GTP-binding positions include 38–45, 64–68, 82–85, 149–152, and 182–185; these read GRSNAGKS, GRTQL, DLPG, TKAD, and LFSA. Mg(2+)-binding residues include Ser45 and Thr66.

It belongs to the TRAFAC class TrmE-Era-EngA-EngB-Septin-like GTPase superfamily. EngB GTPase family. Mg(2+) is required as a cofactor.

Necessary for normal cell division and for the maintenance of normal septation. This chain is Probable GTP-binding protein EngB, found in Pseudomonas putida (strain W619).